We begin with the raw amino-acid sequence, 101 residues long: Apolipoprotein C-II (101 aa).

The N-terminal stretch at 1-22 is a signal peptide; the sequence is MGTRFLLALFLVLLVLGFEVQG. Positions 66–74 are lipid binding; the sequence is AVDEKLRDM. The tract at residues 78–101 is lipoprotein lipase cofactor; sequence STAAVSTYAGIFTDQVLSMLRGEE.

Belongs to the apolipoprotein C2 family. In terms of processing, proapolipoprotein C-II is synthesized as a sialic acid containing glycoprotein which is subsequently desialylated prior to its proteolytic processing. Post-translationally, proapolipoprotein C-II, the major form found in plasma undergoes proteolytic cleavage of its N-terminal hexapeptide to generate apolipoprotein C-II, which occurs as the minor form in plasma.

The protein resides in the secreted. Functionally, component of chylomicrons, very low-density lipoproteins (VLDL), low-density lipoproteins (LDL), and high-density lipoproteins (HDL) in plasma. Plays an important role in lipoprotein metabolism as an activator of lipoprotein lipase. Both proapolipoprotein C-II and apolipoprotein C-II can activate lipoprotein lipase. The chain is Apolipoprotein C-II (APOC2) from Saimiri boliviensis boliviensis (Bolivian squirrel monkey).